The sequence spans 466 residues: Phytase A (466 aa).

Positions 1–19 (MGVFVVLLSIATLFGSTSG) are cleaved as a signal peptide. Asn-27 is a glycosylation site (N-linked (GlcNAc...) asparagine). Cys-31 and Cys-40 are joined by a disulfide. The 1D-myo-inositol hexakisphosphate site is built by Tyr-51, Arg-81, His-82, Arg-85, and Thr-88. 4 cysteine pairs are disulfide-bonded: Cys-71-Cys-414, Cys-215-Cys-465, Cys-264-Cys-282, and Cys-436-Cys-444. The active-site Nucleophile is the His-82. N-linked (GlcNAc...) asparagine glycosylation is found at Asn-105 and Asn-120. 1D-myo-inositol hexakisphosphate is bound at residue Arg-165. 2 N-linked (GlcNAc...) asparagine glycosylation sites follow: Asn-207 and Asn-230. Lys-301 is a 1D-myo-inositol hexakisphosphate binding site. N-linked (GlcNAc...) asparagine glycosylation is found at Asn-339 and Asn-352. 1D-myo-inositol hexakisphosphate contacts are provided by His-361 and Asp-362. Asn-376 is a glycosylation site (N-linked (GlcNAc...) asparagine).

Belongs to the histidine acid phosphatase family. Monomer.

Its subcellular location is the secreted. The enzyme catalyses 1D-myo-inositol hexakisphosphate + H2O = 1D-myo-inositol 1,2,4,5,6-pentakisphosphate + phosphate. It catalyses the reaction 1D-myo-inositol 1,2,4,5,6-pentakisphosphate + H2O = 1D-myo-inositol 1,2,5,6-tetrakisphosphate + phosphate. It carries out the reaction 1D-myo-inositol 1,2,5,6-tetrakisphosphate + H2O = 1D-myo-inositol 1,2,6-trisphosphate + phosphate. The catalysed reaction is 1D-myo-inositol 1,2,6-trisphosphate + H2O = 1D-myo-inositol 1,2-bisphosphate + phosphate. The enzyme catalyses 1D-myo-inositol 1,2-bisphosphate + H2O = 1D-myo-inositol 2-phosphate + phosphate. In terms of biological role, catalyzes the phosphate monoester hydrolysis of phytic acid (myo-inositol hexakisphosphate), which results in the stepwise formation of myo-inositol pentakis-, tetrakis-, tris-, bis-, and monophosphates, as well as the liberation of inorganic phosphate. Myo-inositol 2-monophosphate is the end product. Has a broad substrate specificity and is also able to dephosphorylate other classic acid phosphatase substrates such as p-nitrophenyl phosphate, phenyl phosphate, fructose 1,6-bisphosphate, glucose 6-phosphate, 3-phosphoglycerate, as well as ADP and ATP. This is Phytase A from Aspergillus terreus.